The primary structure comprises 535 residues: Palmdelphin (535 aa).

The stretch at 1-105 (MEEAELLKER…KEELQVSTKE (105 aa)) forms a coiled coil. Residues 423–450 (VVIDDDDDDDDDEEADKKGEENTKESVS) form a disordered region. The segment covering 424-436 (VIDDDDDDDDDEE) has biased composition (acidic residues). The segment covering 437 to 446 (ADKKGEENTK) has biased composition (basic and acidic residues).

It belongs to the paralemmin family.

Its subcellular location is the cytoplasm. It localises to the cell projection. The protein localises to the dendrite. The protein resides in the dendritic spine. This chain is Palmdelphin (palmd), found in Xenopus laevis (African clawed frog).